A 389-amino-acid polypeptide reads, in one-letter code: tRNA N(3)-cytidine methyltransferase METTL2 (389 aa).

Positions 1-20 are disordered; it reads MAASFPEGVPETEDGKRPQF. Residues Trp78, Tyr82, Gly181, Asp206, Asp232, Leu233, and Ile253 each coordinate S-adenosyl-L-methionine.

This sequence belongs to the methyltransferase superfamily. METL family. Monomer. Interacts with DALRD3.

Its subcellular location is the cytoplasm. It catalyses the reaction cytidine(32) in tRNA(Thr) + S-adenosyl-L-methionine = N(3)-methylcytidine(32) in tRNA(Thr) + S-adenosyl-L-homocysteine + H(+). The catalysed reaction is cytidine(32) in tRNA(Arg)(CCU) + S-adenosyl-L-methionine = N(3)-methylcytidine(32) in tRNA(Arg)(CCU) + S-adenosyl-L-homocysteine + H(+). Functionally, S-adenosyl-L-methionine-dependent methyltransferase that mediates N(3)-methylcytidine modification of residue 32 of the tRNA anticodon loop of tRNA(Thr)(UGU) and tRNA(Arg)(CCU). N(3)-methylcytidine methylation by METTL2 requires the N6-threonylcarbamoylation of tRNA (t6A37) by the EKC/KEOPS complex as prerequisite. This Mus musculus (Mouse) protein is tRNA N(3)-cytidine methyltransferase METTL2.